The sequence spans 1489 residues: FERM domain-containing protein C (1489 aa).

Polar residues-rich tracts occupy residues 59–79 (DTES…NFNS) and 103–118 (NSPL…STSI). 4 disordered regions span residues 59 to 86 (DTES…HQHL), 103 to 197 (NSPL…PSTL), 252 to 271 (NSVQ…NNNN), and 277 to 312 (EQQQ…TPDS). Residues 131-153 (SSSSSSSDGDSNSSSDSSDNSSE) show a composition bias toward low complexity. Residues 163 to 172 (HLHLHRHHRK) are compositionally biased toward basic residues. The segment covering 181–195 (FESSSESSEQYGSPS) has biased composition (low complexity). Residues 202–289 (ALKLEKIMQI…QEKQQQQQQH (88 aa)) adopt a coiled-coil conformation. The segment covering 277 to 287 (EQQQEKQQQQQ) has biased composition (low complexity). Over residues 303–312 (RSVSISTPDS) the composition is skewed to polar residues. Positions 356–383 (IKVSKVLEEEMQLQQEFEKQEQLRHSAR) form a coiled coil. Disordered regions lie at residues 396–435 (NLQD…ENQN), 459–479 (VITP…KILT), and 508–569 (EDPL…TTTT). Positions 421–435 (ENVSNDNSSDNENQN) are enriched in low complexity. The span at 545–555 (TASSSSSPTLQ) shows a compositional bias: polar residues. Low complexity predominate over residues 556-569 (ATKTTTTTTTTTTT). In terms of domain architecture, FERM spans 637–934 (ILVHISLVDQ…GYKYFIQHDE (298 aa)). 13 LRR repeats span residues 1017-1040 (KVEL…LKDT), 1053-1075 (ENLN…AFEP), 1087-1110 (HLNL…IEKY), 1111-1133 (PNIE…VILR), 1167-1191 (NKTI…IFEG), 1196-1219 (SLSL…KFIK), 1254-1278 (SCHI…VIKG), 1282-1306 (NQTI…LCQS), 1339-1362 (NKTI…AIGT), 1367-1391 (NETL…ILNG), 1395-1418 (NSTI…SLAN), 1428-1450 (VITL…QLST), and 1451-1474 (NIPI…IKNA).

This Dictyostelium discoideum (Social amoeba) protein is FERM domain-containing protein C (frmC).